The following is a 359-amino-acid chain: EGF-like domain containing protein 2 (359 aa).

The N-terminal stretch at 1-20 (MPPFISHFFLLSTFASLALC) is a signal peptide. 2 consecutive EGF-like domains span residues 21–55 (SFYC…FNCG) and 61–93 (ISAA…PTCQ). Disulfide bonds link C24–C37, C31–C43, C45–C54, C65–C75, C69–C81, and C83–C92.

Prismatic layer of shell (at protein level). Expressed primarily in the mantle with highest level in the mantle edge and lower level in the mantle pallium.

It localises to the secreted. This is EGF-like domain containing protein 2 from Margaritifera margaritifera (Freshwater pearl mussel).